A 328-amino-acid polypeptide reads, in one-letter code: NADH-quinone oxidoreductase subunit H (328 aa).

8 consecutive transmembrane segments (helical) span residues 8-28 (VAAI…AVGA), 81-101 (GLFV…FMVI), 114-134 (IGLL…LFAG), 154-174 (LSYE…AGSF), 186-206 (LWFI…GIAV), 237-257 (FFVG…TLFL), 265-285 (LPPI…FILL), and 304-324 (VCLP…LIFS).

This sequence belongs to the complex I subunit 1 family. As to quaternary structure, NDH-1 is composed of 14 different subunits. Subunits NuoA, H, J, K, L, M, N constitute the membrane sector of the complex.

The protein resides in the cell inner membrane. The catalysed reaction is a quinone + NADH + 5 H(+)(in) = a quinol + NAD(+) + 4 H(+)(out). In terms of biological role, NDH-1 shuttles electrons from NADH, via FMN and iron-sulfur (Fe-S) centers, to quinones in the respiratory chain. The immediate electron acceptor for the enzyme in this species is believed to be ubiquinone. Couples the redox reaction to proton translocation (for every two electrons transferred, four hydrogen ions are translocated across the cytoplasmic membrane), and thus conserves the redox energy in a proton gradient. This subunit may bind ubiquinone. In Chromohalobacter salexigens (strain ATCC BAA-138 / DSM 3043 / CIP 106854 / NCIMB 13768 / 1H11), this protein is NADH-quinone oxidoreductase subunit H.